The primary structure comprises 497 residues: FAD-linked oxidoreductase fogF (497 aa).

The first 18 residues, 1–18 (MRRNILTALACSWLTAHA), serve as a signal peptide directing secretion. The 171-residue stretch at 59 to 229 (NAPTYAGAIS…TSATYKLHKL (171 aa)) folds into the FAD-binding PCMH-type domain.

It belongs to the oxygen-dependent FAD-linked oxidoreductase family. It depends on FAD as a cofactor.

It functions in the pathway secondary metabolite biosynthesis. Functionally, FAD-linked oxidoreductase; part of the gene cluster that mediates the biosynthesis of flavoglaucin and congeners (including aspergin, dihydroauroglaucin and auroglaucin), prenylated salicylaldehyde derivatives carrying a saturated or an unsaturated C-7 side chain. The PKS fogA releases the carboxylic acid (8E,10E,12E)-3,5,7-trihydroxytetradeca-8,10,12-trienoic acid as its product, as well as derivatives with one and two double bonds. FogA is indeed able to reduce the initial triketide, thus being at least partially responsible for the differently saturated heptyl side chains of flavoglaucin congeners. The oxidoreductases fogB, fogC and fogD modify the nascent polyketide in fogA-bound form and, together, fogA, fogB, fogC and fogD are necessary for the formation of the aromatic core and the cyclized PKS products are released as salicyl alcohols. In particular, fogB is responsible for oxidation of a hydroxyl group or reduction of remaining double bond(s) at the C-7 residue whereas fogD is probably involved in the reductive release of the modified PKS products. The cytochrome P450 monooxygenase fogE is then responsible for the hydroxylation at C-3 of the benzene ring. The fogE products are substrates of the prenyltransferase fogH and the prenylated benzyl alcohols are subsequently oxidized by the fogF to produce the final aryl aldehydes flavoglaucin and congeners. The short-chain dehydrogenase fogG does not seem to be involved in the biosynthesis of the prenylated salicylaldehyde derivatives. The chain is FAD-linked oxidoreductase fogF from Aspergillus ruber (strain CBS 135680).